A 414-amino-acid polypeptide reads, in one-letter code: Capsid protein (414 aa).

The segment covering 1-14 has biased composition (polar residues); the sequence is MTSNGSQPQASTPM. 3 disordered regions span residues 1–60, 94–127, and 148–212; these read MTSN…APTA, AQNE…ASMN, and YPTF…NTGG. Composition is skewed to low complexity over residues 15 to 27 and 38 to 60; these read VSAE…ASVP and PAAA…APTA. 3 stretches are compositionally biased toward polar residues: residues 113–127, 153–166, and 185–197; these read LPSS…ASMN, GSGS…QRIF, and QATS…TPFT.

The protein localises to the virion. In Crataegus (hawthorn), this protein is Capsid protein.